The following is an 80-amino-acid chain: MAASKTTIFIVFVLCLSCTLLVNISGIQATSSTLKESLTAEIKPTKVDRCKTDRDCPQSHRCQKDFYYGCVVGECICRAV.

A signal peptide spans 1-29 (MAASKTTIFIVFVLCLSCTLLVNISGIQA). 3 cysteine pairs are disulfide-bonded: Cys50–Cys70, Cys56–Cys75, and Cys62–Cys77.

The protein belongs to the DEFL family.

Its subcellular location is the secreted. In Arabidopsis thaliana (Mouse-ear cress), this protein is Defensin-like protein 291.